The sequence spans 421 residues: UPF0415 protein C7orf25 (421 aa).

The protein belongs to the UPF0415 family.

The chain is UPF0415 protein C7orf25 (C7orf25) from Homo sapiens (Human).